Reading from the N-terminus, the 142-residue chain is Probable pilin MJ0832.1 (142 aa).

The propeptide occupies 1 to 8 (MLKFRKRG). Positions 9-17 (QISLEFSLL) match the QXSXEXXXL motif.

Post-translationally, the N-terminus is cleaved by the prepilin peptidase EppA, which recognizes the class III signal sequence.

The protein localises to the secreted. It is found in the cell surface. It localises to the fimbrium. This is Probable pilin MJ0832.1 from Methanocaldococcus jannaschii (strain ATCC 43067 / DSM 2661 / JAL-1 / JCM 10045 / NBRC 100440) (Methanococcus jannaschii).